Reading from the N-terminus, the 426-residue chain is Protein CgeD (426 aa).

This sequence to B.subtilis spore coat polysaccharide biosynthesis protein SpsA.

In terms of biological role, may be involved in maturation of the outermost layer of the spore. This is Protein CgeD (cgeD) from Bacillus subtilis (strain 168).